The chain runs to 856 residues: Bifunctional uridylyltransferase/uridylyl-removing enzyme (856 aa).

The segment at 1–320 (MTLSAAPLQH…YCQVPRVTQH (320 aa)) is uridylyltransferase. The interval 321 to 678 (ISEYFHAVNG…ARLADDHEGL (358 aa)) is uridylyl-removing. Positions 439–561 (VDEHILMVVR…VRTPRRLAAL (123 aa)) constitute an HD domain. 2 ACT domains span residues 679–760 (QVLI…LPPQ) and 788–856 (ILSI…ALRI).

Belongs to the GlnD family. Requires Mg(2+) as cofactor.

It catalyses the reaction [protein-PII]-L-tyrosine + UTP = [protein-PII]-uridylyl-L-tyrosine + diphosphate. It carries out the reaction [protein-PII]-uridylyl-L-tyrosine + H2O = [protein-PII]-L-tyrosine + UMP + H(+). With respect to regulation, uridylyltransferase (UTase) activity is inhibited by glutamine, while glutamine activates uridylyl-removing (UR) activity. Modifies, by uridylylation and deuridylylation, the PII regulatory proteins (GlnB and homologs), in response to the nitrogen status of the cell that GlnD senses through the glutamine level. Under low glutamine levels, catalyzes the conversion of the PII proteins and UTP to PII-UMP and PPi, while under higher glutamine levels, GlnD hydrolyzes PII-UMP to PII and UMP (deuridylylation). Thus, controls uridylylation state and activity of the PII proteins, and plays an important role in the regulation of nitrogen assimilation and metabolism. The protein is Bifunctional uridylyltransferase/uridylyl-removing enzyme of Chromobacterium violaceum (strain ATCC 12472 / DSM 30191 / JCM 1249 / CCUG 213 / NBRC 12614 / NCIMB 9131 / NCTC 9757 / MK).